We begin with the raw amino-acid sequence, 365 residues long: Peptide chain release factor 2 (365 aa).

Gln-252 carries the N5-methylglutamine modification.

It belongs to the prokaryotic/mitochondrial release factor family. Post-translationally, methylated by PrmC. Methylation increases the termination efficiency of RF2.

It localises to the cytoplasm. Its function is as follows. Peptide chain release factor 2 directs the termination of translation in response to the peptide chain termination codons UGA and UAA. This is Peptide chain release factor 2 from Shewanella woodyi (strain ATCC 51908 / MS32).